The following is a 232-amino-acid chain: Ion-translocating oxidoreductase complex subunit E (232 aa).

A run of 6 helical transmembrane segments spans residues 18-38 (GLVQ…LTNA), 39-59 (LGLG…VSLV), 69-89 (IPVF…LINA), 93-113 (GLYL…IIIG), 127-147 (AAFD…VLGA), and 182-202 (PFLL…LIAL).

This sequence belongs to the NqrDE/RnfAE family. The complex is composed of six subunits: RnfA, RnfB, RnfC, RnfD, RnfE and RnfG.

It is found in the cell inner membrane. In terms of biological role, part of a membrane-bound complex that couples electron transfer with translocation of ions across the membrane. The chain is Ion-translocating oxidoreductase complex subunit E from Shewanella sp. (strain MR-4).